The following is a 153-amino-acid chain: Ribosome maturation factor RimP (153 aa).

It belongs to the RimP family.

The protein resides in the cytoplasm. Its function is as follows. Required for maturation of 30S ribosomal subunits. This is Ribosome maturation factor RimP from Desulforamulus reducens (strain ATCC BAA-1160 / DSM 100696 / MI-1) (Desulfotomaculum reducens).